The primary structure comprises 332 residues: Glycerol-3-phosphate dehydrogenase [NAD(P)+] (332 aa).

The NADPH site is built by Ser-11, Trp-12, Arg-32, Arg-33, and Lys-106. The sn-glycerol 3-phosphate site is built by Lys-106 and Gly-136. Ala-140 serves as a coordination point for NADPH. Sn-glycerol 3-phosphate-binding residues include Lys-191, Asp-244, Ser-254, Arg-255, and Asn-256. Lys-191 functions as the Proton acceptor in the catalytic mechanism. Arg-255 lines the NADPH pocket. NADPH-binding residues include Val-280 and Glu-282.

Belongs to the NAD-dependent glycerol-3-phosphate dehydrogenase family.

The protein localises to the cytoplasm. The catalysed reaction is sn-glycerol 3-phosphate + NAD(+) = dihydroxyacetone phosphate + NADH + H(+). The enzyme catalyses sn-glycerol 3-phosphate + NADP(+) = dihydroxyacetone phosphate + NADPH + H(+). It participates in membrane lipid metabolism; glycerophospholipid metabolism. Its function is as follows. Catalyzes the reduction of the glycolytic intermediate dihydroxyacetone phosphate (DHAP) to sn-glycerol 3-phosphate (G3P), the key precursor for phospholipid synthesis. The sequence is that of Glycerol-3-phosphate dehydrogenase [NAD(P)+] from Corynebacterium aurimucosum (strain ATCC 700975 / DSM 44827 / CIP 107346 / CN-1) (Corynebacterium nigricans).